The chain runs to 307 residues: Probable inactive peptidyl-prolyl cis-trans isomerase-like 6 (307 aa).

The 164-residue stretch at 141-304 (FLDISIDLYP…QNCVITASGQ (164 aa)) folds into the PPIase cyclophilin-type domain.

The protein belongs to the cyclophilin-type PPIase family.

Its function is as follows. Probable inactive PPIase with no peptidyl-prolyl cis-trans isomerase activity. This Bos taurus (Bovine) protein is Probable inactive peptidyl-prolyl cis-trans isomerase-like 6.